A 363-amino-acid polypeptide reads, in one-letter code: Peptide chain release factor 1 (363 aa).

Q237 is subject to N5-methylglutamine. Residues 284–296 (EDEKRRSAEESTR) are compositionally biased toward basic and acidic residues. The tract at residues 284–306 (EDEKRRSAEESTRRSLVASGDRS) is disordered.

This sequence belongs to the prokaryotic/mitochondrial release factor family. Post-translationally, methylated by PrmC. Methylation increases the termination efficiency of RF1.

The protein resides in the cytoplasm. Peptide chain release factor 1 directs the termination of translation in response to the peptide chain termination codons UAG and UAA. This Shewanella oneidensis (strain ATCC 700550 / JCM 31522 / CIP 106686 / LMG 19005 / NCIMB 14063 / MR-1) protein is Peptide chain release factor 1.